Consider the following 415-residue polypeptide: Carbamoyl phosphate synthase arginine-specific small chain (415 aa).

Residues 1–17 (MLRFLKPFPLRFGKRFY) constitute a mitochondrion transit peptide. Residues Ser88, Gly272, and Gly274 each coordinate L-glutamine. One can recognise a Glutamine amidotransferase type-1 domain in the interval 225-412 (NIAVIDCGVK…IKEAIKYQKS (188 aa)). The Nucleophile role is filled by Cys301. Met302, Gln305, Asn343, Gly345, and Tyr346 together coordinate L-glutamine. Residues His385 and Glu387 contribute to the active site.

It belongs to the CarA family. Heterodimer composed of 2 chains; the small (or glutamine) chain promotes the hydrolysis of glutamine to ammonia, which is used by the large (or ammonia) chain to synthesize carbamoyl phosphate.

It is found in the mitochondrion. It localises to the cytoplasm. It carries out the reaction hydrogencarbonate + L-glutamine + 2 ATP + H2O = carbamoyl phosphate + L-glutamate + 2 ADP + phosphate + 2 H(+). The catalysed reaction is L-glutamine + H2O = L-glutamate + NH4(+). It functions in the pathway amino-acid biosynthesis; L-arginine biosynthesis; carbamoyl phosphate from bicarbonate: step 1/1. Small subunit of the arginine-specific carbamoyl phosphate synthase (CPSase). CPSase catalyzes the formation of carbamoyl phosphate from the ammonia moiety of glutamine, carbonate, and phosphate donated by ATP, the first step of the arginine biosynthetic pathway. The small subunit (glutamine amidotransferase) binds and cleaves glutamine to supply the large subunit with the substrate ammonia. This chain is Carbamoyl phosphate synthase arginine-specific small chain (arg5), found in Schizosaccharomyces pombe (strain 972 / ATCC 24843) (Fission yeast).